We begin with the raw amino-acid sequence, 224 residues long: Large ribosomal subunit protein bL25 (224 aa).

Positions 190-224 (EPAPAAEGAAPAEGAAAAAAGGKPAAKTAKPAAKK) are disordered.

It belongs to the bacterial ribosomal protein bL25 family. CTC subfamily. As to quaternary structure, part of the 50S ribosomal subunit; part of the 5S rRNA/L5/L18/L25 subcomplex. Contacts the 5S rRNA. Binds to the 5S rRNA independently of L5 and L18.

In terms of biological role, this is one of the proteins that binds to the 5S RNA in the ribosome where it forms part of the central protuberance. The chain is Large ribosomal subunit protein bL25 from Variovorax paradoxus (strain S110).